The following is a 239-amino-acid chain: Proteasome subunit beta (239 aa).

Residues 1–16 (MRQPDSSLPRTGQDHT) are compositionally biased toward polar residues. The interval 1 to 32 (MRQPDSSLPRTGQDHTLSPYEPELGEVPSNDL) is disordered. Positions 1 to 44 (MRQPDSSLPRTGQDHTLSPYEPELGEVPSNDLSMADLDNVNKTG) are cleaved as a propeptide — removed in mature form; by autocatalysis. Threonine 45 acts as the Nucleophile in catalysis.

The protein belongs to the peptidase T1B family. As to quaternary structure, the 20S proteasome core is composed of 14 alpha and 14 beta subunits that assemble into four stacked heptameric rings, resulting in a barrel-shaped structure. The two inner rings, each composed of seven catalytic beta subunits, are sandwiched by two outer rings, each composed of seven alpha subunits. The catalytic chamber with the active sites is on the inside of the barrel. Has a gated structure, the ends of the cylinder being occluded by the N-termini of the alpha-subunits. Is capped at one or both ends by the proteasome regulatory ATPase, PAN.

Its subcellular location is the cytoplasm. It catalyses the reaction Cleavage of peptide bonds with very broad specificity.. With respect to regulation, the formation of the proteasomal ATPase PAN-20S proteasome complex, via the docking of the C-termini of PAN into the intersubunit pockets in the alpha-rings, triggers opening of the gate for substrate entry. Interconversion between the open-gate and close-gate conformations leads to a dynamic regulation of the 20S proteasome proteolysis activity. Functionally, component of the proteasome core, a large protease complex with broad specificity involved in protein degradation. In Natronomonas pharaonis (strain ATCC 35678 / DSM 2160 / CIP 103997 / JCM 8858 / NBRC 14720 / NCIMB 2260 / Gabara) (Halobacterium pharaonis), this protein is Proteasome subunit beta.